Reading from the N-terminus, the 320-residue chain is Cytochrome f (320 aa).

An N-terminal signal peptide occupies residues methionine 1–alanine 35. Heme is bound by residues tyrosine 36, cysteine 56, cysteine 59, and histidine 60. A helical membrane pass occupies residues valine 286–lysine 306.

This sequence belongs to the cytochrome f family. As to quaternary structure, the 4 large subunits of the cytochrome b6-f complex are cytochrome b6, subunit IV (17 kDa polypeptide, petD), cytochrome f and the Rieske protein, while the 4 small subunits are PetG, PetL, PetM and PetN. The complex functions as a dimer. Heme serves as cofactor.

Its subcellular location is the plastid. The protein localises to the chloroplast thylakoid membrane. In terms of biological role, component of the cytochrome b6-f complex, which mediates electron transfer between photosystem II (PSII) and photosystem I (PSI), cyclic electron flow around PSI, and state transitions. The protein is Cytochrome f of Populus trichocarpa (Western balsam poplar).